The chain runs to 180 residues: Large ribosomal subunit protein uL6 (180 aa).

The protein belongs to the universal ribosomal protein uL6 family. Part of the 50S ribosomal subunit.

Functionally, this protein binds to the 23S rRNA, and is important in its secondary structure. It is located near the subunit interface in the base of the L7/L12 stalk, and near the tRNA binding site of the peptidyltransferase center. In Anaeromyxobacter sp. (strain K), this protein is Large ribosomal subunit protein uL6.